The sequence spans 241 residues: uncharacterized protein (241 aa).

This is an uncharacterized protein from Saccharolobus islandicus (Sulfolobus islandicus).